The chain runs to 578 residues: Sulfite reductase [NADPH] hemoprotein beta-component (578 aa).

[4Fe-4S] cluster-binding residues include C441, C447, C487, and C491. Residue C491 coordinates siroheme.

Belongs to the nitrite and sulfite reductase 4Fe-4S domain family. Alpha(8)-beta(8). The alpha component is a flavoprotein, the beta component is a hemoprotein. The cofactor is siroheme. Requires [4Fe-4S] cluster as cofactor.

The catalysed reaction is hydrogen sulfide + 3 NADP(+) + 3 H2O = sulfite + 3 NADPH + 4 H(+). The protein operates within sulfur metabolism; hydrogen sulfide biosynthesis; hydrogen sulfide from sulfite (NADPH route): step 1/1. In terms of biological role, component of the sulfite reductase complex that catalyzes the 6-electron reduction of sulfite to sulfide. This is one of several activities required for the biosynthesis of L-cysteine from sulfate. The protein is Sulfite reductase [NADPH] hemoprotein beta-component of Vibrio parahaemolyticus serotype O3:K6 (strain RIMD 2210633).